A 96-amino-acid polypeptide reads, in one-letter code: C-C motif chemokine 20 (96 aa).

Residues 1 to 26 (MACKHLPFLALAGVLLAYLCSQSEAA) form the signal peptide. Cystine bridges form between cysteine 31-cysteine 58 and cysteine 32-cysteine 74.

The protein belongs to the intercrine beta (chemokine CC) family. Low levels in thymus and lung.

Its subcellular location is the secreted. Functionally, acts as a ligand for C-C chemokine receptor CCR6. Signals through binding and activation of CCR6 and induces a strong chemotactic response and mobilization of intracellular calcium ions. The ligand-receptor pair CCL20-CCR6 is responsible for the chemotaxis of dendritic cells (DC), effector/memory T-cells and B-cells and plays an important role at skin and mucosal surfaces under homeostatic and inflammatory conditions, as well as in pathology, including cancer and autoimmune diseases. CCL20 acts as a chemotactic factor that attracts lymphocytes and, slightly, neutrophils, but not monocytes. Involved in the recruitment of both the pro-inflammatory IL17 producing helper T-cells (Th17) and the regulatory T-cells (Treg) to sites of inflammation. Required for optimal migration of thymic natural regulatory T cells (nTregs) and DN1 early thymocyte progenitor cells. Positively regulates sperm motility and chemotaxis via its binding to CCR6 which triggers Ca2+ mobilization in the sperm which is important for its motility. May be involved in formation and function of the mucosal lymphoid tissues by attracting lymphocytes and dendritic cells towards epithelial cells. This is C-C motif chemokine 20 (Ccl20) from Rattus norvegicus (Rat).